The chain runs to 282 residues: Glutamyl endopeptidase (282 aa).

A signal peptide spans 1–27 (MKKRFLSICTMTIAALATTTMVNTSYA). The propeptide occupies 28 to 66 (KTDTESHNHSSLGTENKNVLDINSSSHNIKPSQNKSYPS). Active-site charge relay system residues include His117, Asp159, and Ser235.

The protein belongs to the peptidase S1B family. As to quaternary structure, monomer.

It is found in the secreted. It carries out the reaction Preferential cleavage: Glu-|-Xaa, Asp-|-Xaa.. Inhibited by diisopropyl fluorophosphate. In terms of biological role, exhibits a significant hydrolytic activity for the carbonyl side of glutamic acid. Shows activity toward human fibronectin and type 1 collagen. The protein is Glutamyl endopeptidase (gseA) of Staphylococcus epidermidis.